Here is a 355-residue protein sequence, read N- to C-terminus: UDP-3-O-acylglucosamine N-acyltransferase (355 aa).

The active-site Proton acceptor is His258.

Belongs to the transferase hexapeptide repeat family. LpxD subfamily. As to quaternary structure, homotrimer.

The enzyme catalyses a UDP-3-O-[(3R)-3-hydroxyacyl]-alpha-D-glucosamine + a (3R)-hydroxyacyl-[ACP] = a UDP-2-N,3-O-bis[(3R)-3-hydroxyacyl]-alpha-D-glucosamine + holo-[ACP] + H(+). It functions in the pathway bacterial outer membrane biogenesis; LPS lipid A biosynthesis. Catalyzes the N-acylation of UDP-3-O-acylglucosamine using 3-hydroxyacyl-ACP as the acyl donor. Is involved in the biosynthesis of lipid A, a phosphorylated glycolipid that anchors the lipopolysaccharide to the outer membrane of the cell. The polypeptide is UDP-3-O-acylglucosamine N-acyltransferase (Agrobacterium fabrum (strain C58 / ATCC 33970) (Agrobacterium tumefaciens (strain C58))).